Consider the following 384-residue polypeptide: Probable splicing factor YJU2B (384 aa).

Residues 1 to 28 (MGERKGTNKYYPPDFDPAKHGSLNGYRN) are disordered. The stretch at 183-212 (NSLLRSKFREEKKQIKEEEERDQALLTKAS) forms a coiled coil. The interval 275-331 (GIRTKTPSVPGISPVSLGVVRRTSKEENKAEDKSVESPDGSRSRKAEGMCRKEETGC) is disordered. Positions 297–331 (TSKEENKAEDKSVESPDGSRSRKAEGMCRKEETGC) are enriched in basic and acidic residues.

This sequence belongs to the CWC16 family.

It localises to the nucleus. Functionally, may be involved in mRNA splicing. The chain is Probable splicing factor YJU2B (yju2b) from Xenopus laevis (African clawed frog).